Here is a 447-residue protein sequence, read N- to C-terminus: Cobyrinate a,c-diamide synthase (447 aa).

The 188-residue stretch at Lys252–Tyr439 folds into the GATase cobBQ-type domain. Residue Cys331 is the Nucleophile of the active site.

This sequence belongs to the CobB/CbiA family. Mg(2+) serves as cofactor.

The catalysed reaction is cob(II)yrinate + 2 L-glutamine + 2 ATP + 2 H2O = cob(II)yrinate a,c diamide + 2 L-glutamate + 2 ADP + 2 phosphate + 2 H(+). It catalyses the reaction Ni-sirohydrochlorin + 2 L-glutamine + 2 ATP + 2 H2O = Ni-sirohydrochlorin a,c-diamide + 2 L-glutamate + 2 ADP + 2 phosphate + 2 H(+). The protein operates within cofactor biosynthesis; adenosylcobalamin biosynthesis; cob(II)yrinate a,c-diamide from sirohydrochlorin (anaerobic route): step 10/10. Catalyzes the ATP-dependent amidation of the two carboxylate groups at positions a and c of cobyrinate, using either L-glutamine or ammonia as the nitrogen source. Involved in the biosynthesis of the unique nickel-containing tetrapyrrole coenzyme F430, the prosthetic group of methyl-coenzyme M reductase (MCR), which plays a key role in methanogenesis and anaerobic methane oxidation. Catalyzes the ATP-dependent amidation of the two carboxylate groups at positions a and c of Ni-sirohydrochlorin, using L-glutamine or ammonia as the nitrogen source. This is Cobyrinate a,c-diamide synthase from Methanococcus maripaludis (strain C7 / ATCC BAA-1331).